Consider the following 318-residue polypeptide: Probable plastid-lipid-associated protein 1, chloroplastic (318 aa).

A chloroplast-targeting transit peptide spans 1–55 (MATVPLFTQFPCKTLNPSSSNTKHQSKSPILLPINSINRRSEIGVSVHRPDFKIR). Thr57 carries the post-translational modification Phosphothreonine.

Belongs to the PAP/fibrillin family. In terms of assembly, interacts (via N-terminus) with ABI2. Expressed in flower buds. Detected in tapetal cells, endothecium and connective in anthers and in subepidermal cells in filaments.

The protein localises to the plastid. It localises to the chloroplast. It is found in the plastoglobule. The protein resides in the chloroplast thylakoid. Functionally, probably involved in light/cold stress-related jasmonate (JA) biosynthesis. Contributes to the protection of photosystem II (PSII) against light stress. The chain is Probable plastid-lipid-associated protein 1, chloroplastic (PAP1) from Arabidopsis thaliana (Mouse-ear cress).